Here is a 524-residue protein sequence, read N- to C-terminus: Mediator of RNA polymerase II transcription subunit 8 (524 aa).

Met1 is modified (N-acetylmethionine). A coiled-coil region spans residues 137 to 162 (MQIERLKARMDMIAAACENAERVLAD). Disordered regions lie at residues 291-315 (VPSP…LMQL) and 474-524 (MMQT…QNPQ). Low complexity-rich tracts occupy residues 295–315 (QHQI…LMQL) and 474–505 (MMQT…TNQQ). Polar residues predominate over residues 506-524 (SLQPNNMMQNAQQRHQNPQ).

It belongs to the Mediator complex subunit 8 family. In terms of assembly, component of the Mediator complex.

The protein localises to the nucleus. Its function is as follows. Component of the Mediator complex, a coactivator involved in the regulated transcription of nearly all RNA polymerase II-dependent genes. Mediator functions as a bridge to convey information from gene-specific regulatory proteins to the basal RNA polymerase II transcription machinery. The Mediator complex, having a compact conformation in its free form, is recruited to promoters by direct interactions with regulatory proteins and serves for the assembly of a functional preinitiation complex with RNA polymerase II and the general transcription factors. Regulator of both plant defense and flowering time. Involved in pollen tube growth. The sequence is that of Mediator of RNA polymerase II transcription subunit 8 (MED8) from Arabidopsis thaliana (Mouse-ear cress).